A 538-amino-acid chain; its full sequence is Dihomomethionine N-hydroxylase (538 aa).

Residues 8–28 traverse the membrane as a helical segment; the sequence is LPYPFHILLVFILSMASITLL.

The protein belongs to the cytochrome P450 family. The cofactor is heme. As to expression, highly expressed in cotyledons, leaves, stems and siliques. Detected in flowers and lateral roots, but not in the main root. Expressed only in the vascular bundles in apical plant parts.

The protein resides in the endoplasmic reticulum membrane. The enzyme catalyses an L-polyhomomethionine + 2 reduced [NADPH--hemoprotein reductase] + 2 O2 = an (E)-omega-(methylsulfanyl)-alkanal oxime + 2 oxidized [NADPH--hemoprotein reductase] + CO2 + 3 H2O + 2 H(+). It carries out the reaction L-dihomomethionine + 2 reduced [NADPH--hemoprotein reductase] + 2 O2 = (E)-5-(methylsulfanyl)pentanal oxime + 2 oxidized [NADPH--hemoprotein reductase] + CO2 + 3 H2O + 2 H(+). The catalysed reaction is L-trihomomethionine + 2 reduced [NADPH--hemoprotein reductase] + 2 O2 = (E)-6-(methylsulfanyl)hexanal oxime + 2 oxidized [NADPH--hemoprotein reductase] + CO2 + 3 H2O + 2 H(+). Its function is as follows. Catalyzes the conversion of the short chain elongated methionines di-, tri-, and tetrahomomethionine to their respective aldoximes 5-methylthiopentanaldoxime, 6-methylthiohexanaldoxime, and 7-methylheptanaldoxime. This is Dihomomethionine N-hydroxylase (CYP79F1) from Arabidopsis thaliana (Mouse-ear cress).